Consider the following 417-residue polypeptide: Serine hydroxymethyltransferase (417 aa).

(6S)-5,6,7,8-tetrahydrofolate contacts are provided by residues leucine 121 and 125–127 (GHL). N6-(pyridoxal phosphate)lysine is present on lysine 229. Residue 355–357 (SPF) participates in (6S)-5,6,7,8-tetrahydrofolate binding.

The protein belongs to the SHMT family. In terms of assembly, homodimer. The cofactor is pyridoxal 5'-phosphate.

The protein resides in the cytoplasm. It catalyses the reaction (6R)-5,10-methylene-5,6,7,8-tetrahydrofolate + glycine + H2O = (6S)-5,6,7,8-tetrahydrofolate + L-serine. It functions in the pathway one-carbon metabolism; tetrahydrofolate interconversion. Its pathway is amino-acid biosynthesis; glycine biosynthesis; glycine from L-serine: step 1/1. Functionally, catalyzes the reversible interconversion of serine and glycine with tetrahydrofolate (THF) serving as the one-carbon carrier. This reaction serves as the major source of one-carbon groups required for the biosynthesis of purines, thymidylate, methionine, and other important biomolecules. Also exhibits THF-independent aldolase activity toward beta-hydroxyamino acids, producing glycine and aldehydes, via a retro-aldol mechanism. The polypeptide is Serine hydroxymethyltransferase (Erwinia tasmaniensis (strain DSM 17950 / CFBP 7177 / CIP 109463 / NCPPB 4357 / Et1/99)).